We begin with the raw amino-acid sequence, 85 residues long: Large ribosomal subunit protein bL27 (85 aa).

The interval 1 to 22 is disordered; the sequence is MAHKKGQGSTQNNRDSAGRRLG.

It belongs to the bacterial ribosomal protein bL27 family.

The protein is Large ribosomal subunit protein bL27 of Sulfurimonas denitrificans (strain ATCC 33889 / DSM 1251) (Thiomicrospira denitrificans (strain ATCC 33889 / DSM 1251)).